Here is a 101-residue protein sequence, read N- to C-terminus: Small ribosomal subunit protein uS14 (101 aa).

Belongs to the universal ribosomal protein uS14 family. As to quaternary structure, part of the 30S ribosomal subunit. Contacts proteins S3 and S10.

In terms of biological role, binds 16S rRNA, required for the assembly of 30S particles and may also be responsible for determining the conformation of the 16S rRNA at the A site. The chain is Small ribosomal subunit protein uS14 from Bartonella quintana (strain Toulouse) (Rochalimaea quintana).